The chain runs to 183 residues: ATP synthase subunit delta (183 aa).

It belongs to the ATPase delta chain family. F-type ATPases have 2 components, F(1) - the catalytic core - and F(0) - the membrane proton channel. F(1) has five subunits: alpha(3), beta(3), gamma(1), delta(1), epsilon(1). F(0) has three main subunits: a(1), b(2) and c(10-14). The alpha and beta chains form an alternating ring which encloses part of the gamma chain. F(1) is attached to F(0) by a central stalk formed by the gamma and epsilon chains, while a peripheral stalk is formed by the delta and b chains.

It localises to the cell membrane. Its function is as follows. F(1)F(0) ATP synthase produces ATP from ADP in the presence of a proton or sodium gradient. F-type ATPases consist of two structural domains, F(1) containing the extramembraneous catalytic core and F(0) containing the membrane proton channel, linked together by a central stalk and a peripheral stalk. During catalysis, ATP synthesis in the catalytic domain of F(1) is coupled via a rotary mechanism of the central stalk subunits to proton translocation. In terms of biological role, this protein is part of the stalk that links CF(0) to CF(1). It either transmits conformational changes from CF(0) to CF(1) or is implicated in proton conduction. This chain is ATP synthase subunit delta, found in Halalkalibacterium halodurans (strain ATCC BAA-125 / DSM 18197 / FERM 7344 / JCM 9153 / C-125) (Bacillus halodurans).